We begin with the raw amino-acid sequence, 456 residues long: Chromosomal replication initiator protein DnaA (456 aa).

Residues 1 to 85 (MDADLNKLWE…EIKFIIESDL (85 aa)) form a domain I, interacts with DnaA modulators region. The interval 85 to 117 (LNNEDELNNSDNSDKNRDKNSRRNIVVNDEMSS) is domain II. The segment at 118-334 (TLNPKYTFNS…GALIRIIAYS (217 aa)) is domain III, AAA+ region. Positions 162, 164, 165, and 166 each coordinate ATP. The domain IV, binds dsDNA stretch occupies residues 335 to 456 (SLTNREVTVD…SDITKKVSQN (122 aa)).

This sequence belongs to the DnaA family. In terms of assembly, oligomerizes as a right-handed, spiral filament on DNA at oriC.

It is found in the cytoplasm. In terms of biological role, plays an essential role in the initiation and regulation of chromosomal replication. ATP-DnaA binds to the origin of replication (oriC) to initiate formation of the DNA replication initiation complex once per cell cycle. Binds the DnaA box (a 9 base pair repeat at the origin) and separates the double-stranded (ds)DNA. Forms a right-handed helical filament on oriC DNA; dsDNA binds to the exterior of the filament while single-stranded (ss)DNA is stabiized in the filament's interior. The ATP-DnaA-oriC complex binds and stabilizes one strand of the AT-rich DNA unwinding element (DUE), permitting loading of DNA polymerase. After initiation quickly degrades to an ADP-DnaA complex that is not apt for DNA replication. Binds acidic phospholipids. In Clostridium botulinum (strain Eklund 17B / Type B), this protein is Chromosomal replication initiator protein DnaA.